A 132-amino-acid chain; its full sequence is PGA2-homolog C27.01c (132 aa).

Residues 17 to 34 (WIRIIVYVGGYMLIRPYL) form a helical membrane-spanning segment. 2 disordered regions span residues 50–90 (LLEG…DAEF) and 106–132 (EYFKNQDKSPLDAYADDDEDIEEHLED). Over residues 62 to 75 (EMTHGTKPKEHGEF) the composition is skewed to basic and acidic residues. Over residues 76–87 (DTDDEEEEENPD) the composition is skewed to acidic residues. At Thr-77 the chain carries Phosphothreonine. Basic and acidic residues predominate over residues 106 to 115 (EYFKNQDKSP). Acidic residues predominate over residues 119–132 (YADDDEDIEEHLED).

It belongs to the PGA2 family.

The protein localises to the endoplasmic reticulum membrane. Its subcellular location is the nucleus membrane. Functionally, involved processing and trafficking glycosylated proteins. The polypeptide is PGA2-homolog C27.01c (Schizosaccharomyces pombe (strain 972 / ATCC 24843) (Fission yeast)).